The following is a 146-amino-acid chain: Acidic phospholipase A2 S5-32M (146 aa).

The signal sequence occupies residues 1 to 19 (MYPAHLLVLLAVCVSLLGA). Positions 20 to 27 (ASIPPQPL) are excised as a propeptide. 7 cysteine pairs are disulfide-bonded: cysteine 38–cysteine 98, cysteine 54–cysteine 145, cysteine 56–cysteine 72, cysteine 71–cysteine 126, cysteine 78–cysteine 119, cysteine 87–cysteine 112, and cysteine 105–cysteine 117. Residues tyrosine 55, glycine 57, and glycine 59 each contribute to the Ca(2+) site. The active site involves histidine 75. Aspartate 76 provides a ligand contact to Ca(2+). The active site involves aspartate 120.

It belongs to the phospholipase A2 family. Group I subfamily. D49 sub-subfamily. Requires Ca(2+) as cofactor. In terms of tissue distribution, expressed by the venom gland.

It localises to the secreted. It carries out the reaction a 1,2-diacyl-sn-glycero-3-phosphocholine + H2O = a 1-acyl-sn-glycero-3-phosphocholine + a fatty acid + H(+). Its function is as follows. Snake venom phospholipase A2 (PLA2) that inhibits collagen-induced platelet aggregation. PLA2 catalyzes the calcium-dependent hydrolysis of the 2-acyl groups in 3-sn-phosphoglycerides. The protein is Acidic phospholipase A2 S5-32M of Austrelaps superbus (Lowland copperhead snake).